We begin with the raw amino-acid sequence, 309 residues long: tRNA uridine(34) hydroxylase (309 aa).

One can recognise a Rhodanese domain in the interval 130–224; that stretch reads SDPDTIVIDT…YLEEVPQEES (95 aa). The Cysteine persulfide intermediate role is filled by cysteine 184.

This sequence belongs to the TrhO family.

The catalysed reaction is uridine(34) in tRNA + AH2 + O2 = 5-hydroxyuridine(34) in tRNA + A + H2O. Catalyzes oxygen-dependent 5-hydroxyuridine (ho5U) modification at position 34 in tRNAs. This chain is tRNA uridine(34) hydroxylase, found in Rhizobium etli (strain ATCC 51251 / DSM 11541 / JCM 21823 / NBRC 15573 / CFN 42).